The primary structure comprises 520 residues: Rho GTPase-activating protein gacV (520 aa).

The helical transmembrane segment at 8–28 threads the bilayer; the sequence is NIKTYYIIGIITLIFIVSAVI. Residues 28–192 are a coiled coil; sequence IKNQLSSSNQ…EEQEEEQFSM (165 aa). Disordered stretches follow at residues 33-73, 121-189, 348-373, and 489-520; these read SSSN…KLDN, EEKQ…EEEQ, NNNN…NNNE, and LQEQ…DQEE. Residues 52 to 62 show a composition bias toward basic residues; that stretch reads SKGRGNKKGKK. The span at 63–73 shows a compositional bias: basic and acidic residues; sequence PEKIQEKKLDN. The span at 140–189 shows a compositional bias: acidic residues; that stretch reads QEEEEEEEEQQEIEEDEEEEEGQEQEEEEEQQEIEEGEEEQQEEEQEEEQ. The Rho-GAP domain maps to 195 to 472; the sequence is VSIERLMDFQ…ILLKQKKEIA (278 aa). Residues 348–372 show a composition bias toward low complexity; sequence NNNNNNNNNNNNNNNNNNDNNNNNN. Positions 480–520 form a coiled coil; the sequence is YFKDEYSKKLQEQNDQEEDNQEEEKDNQEEDEDEEDKDQEE. Over residues 493 to 520 the composition is skewed to acidic residues; that stretch reads NDQEEDNQEEEKDNQEEDEDEEDKDQEE.

Its subcellular location is the membrane. Rho GTPase-activating protein involved in the signal transduction pathway. The chain is Rho GTPase-activating protein gacV (gacV) from Dictyostelium discoideum (Social amoeba).